A 239-amino-acid chain; its full sequence is Lytic polysaccharide monooxygenase-like protein X325 (239 aa).

Residues 1–24 (MVLPSSVSQWAALIALLCAGLANA) form the signal peptide. A Cu(2+)-binding site is contributed by H25. Residues N41, N56, N79, N117, N150, and N197 are each glycosylated (N-linked (GlcNAc...) asparagine). Cystine bridges form between C71–C176 and C141–C195. S214 carries the GPI-anchor amidated serine lipid modification. Positions 215–239 (AAAPKSSLMSVLPVYMVALLSWAMM) are cleaved as a propeptide — removed in mature form.

This sequence belongs to the X325 family. Cu(2+) is required as a cofactor.

Its subcellular location is the cell membrane. Its function is as follows. Lytic polysaccharide monooxygenase-like protein that has diverged to biological functions other than polysaccharide degradation since it does not perform oxidative cleavage of polysaccharides. Acts as a cell surface-bound protein that functions in the copper-accumulation pathway. May also act as the major cell wall sensor that regulates MAP kinase-dependent hyphal anastomosis, the fusion of hyphal cells. This is Lytic polysaccharide monooxygenase-like protein X325 from Aspergillus fumigatus (strain ATCC MYA-4609 / CBS 101355 / FGSC A1100 / Af293) (Neosartorya fumigata).